Consider the following 209-residue polypeptide: NDR1/HIN1-like protein 1 (209 aa).

A helical transmembrane segment spans residues Ile18–Ala38. Residue Asn58 is glycosylated (N-linked (GlcNAc...) asparagine).

In terms of tissue distribution, expressed in rosette leaves, cauline leaves, stems, and siliques, and at lower levels in roots and flowers.

It is found in the cell membrane. In terms of biological role, may play a role in plant immunity. This chain is NDR1/HIN1-like protein 1, found in Arabidopsis thaliana (Mouse-ear cress).